Reading from the N-terminus, the 587-residue chain is Aspartate--tRNA ligase (587 aa).

L-aspartate is bound at residue glutamate 174. Positions 198 to 201 (QITK) are aspartate. Arginine 220 contributes to the L-aspartate binding site. ATP-binding positions include 220-222 (RDE) and glutamine 229. Residue histidine 443 coordinates L-aspartate. Residue glutamate 477 coordinates ATP. Arginine 484 is a binding site for L-aspartate. ATP is bound at residue 529-532 (GLDR).

The protein belongs to the class-II aminoacyl-tRNA synthetase family. Type 1 subfamily. In terms of assembly, homodimer.

Its subcellular location is the cytoplasm. The enzyme catalyses tRNA(Asp) + L-aspartate + ATP = L-aspartyl-tRNA(Asp) + AMP + diphosphate. Its function is as follows. Catalyzes the attachment of L-aspartate to tRNA(Asp) in a two-step reaction: L-aspartate is first activated by ATP to form Asp-AMP and then transferred to the acceptor end of tRNA(Asp). The protein is Aspartate--tRNA ligase of Streptococcus pneumoniae (strain Hungary19A-6).